We begin with the raw amino-acid sequence, 490 residues long: Betaine aldehyde dehydrogenase (490 aa).

K(+) is bound by residues T26, I27, and D93. 150-152 (GAW) provides a ligand contact to NAD(+). K162 functions as the Charge relay system in the catalytic mechanism. An NAD(+)-binding site is contributed by 176–179 (KPSE). V180 is a binding site for K(+). 230-233 (GVAS) provides a ligand contact to NAD(+). L246 provides a ligand contact to K(+). The active-site Proton acceptor is E252. NAD(+) contacts are provided by G254, C286, and E387. The Nucleophile role is filled by C286. C286 bears the Cysteine sulfenic acid (-SOH) mark. The K(+) site is built by K457 and G460. The active-site Charge relay system is the E464.

This sequence belongs to the aldehyde dehydrogenase family. In terms of assembly, dimer of dimers. K(+) serves as cofactor.

It carries out the reaction betaine aldehyde + NAD(+) + H2O = glycine betaine + NADH + 2 H(+). It participates in amine and polyamine biosynthesis; betaine biosynthesis via choline pathway; betaine from betaine aldehyde: step 1/1. In terms of biological role, involved in the biosynthesis of the osmoprotectant glycine betaine. Catalyzes the irreversible oxidation of betaine aldehyde to the corresponding acid. The chain is Betaine aldehyde dehydrogenase from Escherichia coli O9:H4 (strain HS).